Reading from the N-terminus, the 657-residue chain is Penicillin-binding protein activator LpoA (657 aa).

The N-terminal stretch at 1–25 (MLSSTFVRSKAGLVPVILAALILAA) is a signal peptide. The N-palmitoyl cysteine moiety is linked to residue cysteine 26. Residue cysteine 26 is the site of S-diacylglycerol cysteine attachment.

The protein belongs to the LpoA family. As to quaternary structure, interacts with PBP1a.

It localises to the cell outer membrane. Regulator of peptidoglycan synthesis that is essential for the function of penicillin-binding protein 1A (PBP1a). This Yersinia pestis bv. Antiqua (strain Angola) protein is Penicillin-binding protein activator LpoA.